A 76-amino-acid chain; its full sequence is Pigment-dispersing hormone A peptides (76 aa).

The signal sequence occupies residues 1–20; it reads MRSAMVVLVLVAMVAVFTRA. Ala73 is subject to Alanine amide.

It belongs to the arthropod PDH family. In terms of tissue distribution, optical ganglia of the eyestalk.

The protein localises to the secreted. Functionally, the pigment-dispersing hormone causes the migration of the distal retinal pigment into the proximal end of the pigment chromatophore cells and thus decreases the amount of light entering the retinulas. May also function as a neurotransmitter and/or neuromodulator. This is Pigment-dispersing hormone A peptides from Faxonius limosus (Spinycheek crayfish).